A 404-amino-acid chain; its full sequence is Cysteine desulfurase IscS (404 aa).

Residues 75–76, Asn155, Gln183, and 203–205 contribute to the pyridoxal 5'-phosphate site; these read AT and SGH. Position 206 is an N6-(pyridoxal phosphate)lysine (Lys206). Position 243 (Thr243) interacts with pyridoxal 5'-phosphate. The active-site Cysteine persulfide intermediate is Cys328. Cys328 serves as a coordination point for [2Fe-2S] cluster.

The protein belongs to the class-V pyridoxal-phosphate-dependent aminotransferase family. NifS/IscS subfamily. In terms of assembly, homodimer. Forms a heterotetramer with IscU, interacts with other sulfur acceptors. Pyridoxal 5'-phosphate serves as cofactor.

The protein localises to the cytoplasm. The catalysed reaction is (sulfur carrier)-H + L-cysteine = (sulfur carrier)-SH + L-alanine. Its pathway is cofactor biosynthesis; iron-sulfur cluster biosynthesis. Functionally, master enzyme that delivers sulfur to a number of partners involved in Fe-S cluster assembly, tRNA modification or cofactor biosynthesis. Catalyzes the removal of elemental sulfur atoms from cysteine to produce alanine. Functions as a sulfur delivery protein for Fe-S cluster synthesis onto IscU, an Fe-S scaffold assembly protein, as well as other S acceptor proteins. The polypeptide is Cysteine desulfurase IscS (Shewanella baltica (strain OS223)).